The sequence spans 66 residues: uncharacterized protein (66 aa).

A compositionally biased stretch (low complexity) spans 1–20 (MTIINSISNFGSNNSFSNNN). The disordered stretch occupies residues 1–47 (MTIINSISNFGSNNSFSNNNTVNQKSVIKRSKQMKNDNTSIGSSFKN). The span at 36 to 47 (NDNTSIGSSFKN) shows a compositional bias: polar residues.

This is an uncharacterized protein from Dictyostelium discoideum (Social amoeba).